A 259-amino-acid chain; its full sequence is UPF0246 protein VSAL_I2547 (259 aa).

It belongs to the UPF0246 family.

This Aliivibrio salmonicida (strain LFI1238) (Vibrio salmonicida (strain LFI1238)) protein is UPF0246 protein VSAL_I2547.